We begin with the raw amino-acid sequence, 168 residues long: Nicotinamide-nucleotide adenylyltransferase (168 aa).

This sequence belongs to the archaeal NMN adenylyltransferase family.

It is found in the cytoplasm. The catalysed reaction is beta-nicotinamide D-ribonucleotide + ATP + H(+) = diphosphate + NAD(+). The protein operates within cofactor biosynthesis; NAD(+) biosynthesis; NAD(+) from nicotinamide D-ribonucleotide: step 1/1. The sequence is that of Nicotinamide-nucleotide adenylyltransferase from Methanocorpusculum labreanum (strain ATCC 43576 / DSM 4855 / Z).